The following is a 259-amino-acid chain: Proteasome subunit beta type-4 (259 aa).

Belongs to the peptidase T1B family. In terms of assembly, the 26S proteasome consists of a 20S proteasome core and two 19S regulatory subunits. The 20S proteasome core is composed of 28 subunits that are arranged in four stacked rings, resulting in a barrel-shaped structure. The two end rings are each formed by seven alpha subunits, and the two central rings are each formed by seven beta subunits. The catalytic chamber with the active sites is on the inside of the barrel.

It is found in the cytoplasm. Its subcellular location is the nucleus. Its function is as follows. Non-catalytic component of the proteasome, a multicatalytic proteinase complex which is characterized by its ability to cleave peptides with Arg, Phe, Tyr, Leu, and Glu adjacent to the leaving group at neutral or slightly basic pH. The proteasome has an ATP-dependent proteolytic activity. The polypeptide is Proteasome subunit beta type-4 (psmB4-1) (Dictyostelium discoideum (Social amoeba)).